A 323-amino-acid polypeptide reads, in one-letter code: Beta-ketoacyl-[acyl-carrier-protein] synthase III (323 aa).

Catalysis depends on residues Cys112 and His249. An ACP-binding region spans residues Gln250 to Arg254. Asn279 is a catalytic residue.

The protein belongs to the thiolase-like superfamily. FabH family. As to quaternary structure, homodimer.

The protein localises to the cytoplasm. It carries out the reaction malonyl-[ACP] + acetyl-CoA + H(+) = 3-oxobutanoyl-[ACP] + CO2 + CoA. It functions in the pathway lipid metabolism; fatty acid biosynthesis. Catalyzes the condensation reaction of fatty acid synthesis by the addition to an acyl acceptor of two carbons from malonyl-ACP. Catalyzes the first condensation reaction which initiates fatty acid synthesis and may therefore play a role in governing the total rate of fatty acid production. Possesses both acetoacetyl-ACP synthase and acetyl transacylase activities. Its substrate specificity determines the biosynthesis of branched-chain and/or straight-chain of fatty acids. The protein is Beta-ketoacyl-[acyl-carrier-protein] synthase III of Clostridium kluyveri (strain NBRC 12016).